Reading from the N-terminus, the 1141-residue chain is Putative late blight resistance protein homolog R1B-13 (1141 aa).

Positions 417 to 437 form a coiled coil; the sequence is DSLAFLKNQIQVIQMEFEILQ. Positions 516 to 742 constitute an NB-ARC domain; the sequence is TVITHTSSQL…LSIVLVADVL (227 aa). 5 LRR repeats span residues 826-851, 869-894, 992-1016, 1017-1041, and 1043-1068; these read FKFL…PYLR, LWNL…VWDM, APNL…TVDH, LKHL…VSNG, and FPQL…AFPI.

This sequence belongs to the disease resistance NB-LRR family.

Its subcellular location is the cytoplasm. It localises to the membrane. Its function is as follows. Confers resistance to late blight (Phytophthora infestans) races carrying the avirulence gene Avr1. Resistance proteins guard the plant against pathogens that contain an appropriate avirulence protein via an indirect interaction with this avirulence protein. That triggers a defense system including the hypersensitive response, which restricts the pathogen growth. The protein is Putative late blight resistance protein homolog R1B-13 (R1B-13) of Solanum demissum (Wild potato).